A 457-amino-acid chain; its full sequence is Interferon regulatory factor 7 (457 aa).

A DNA-binding region (IRF tryptophan pentad repeat) is located at residues 9–126 (RVLFGDWLLG…DPHKVYELSR (118 aa)). Residue K92 is modified to N6-acetyllysine; by KAT2A and KAT2B. Residues 238 to 410 (RSLGFLDVTI…TLILVKLEPW (173 aa)) are necessary for the interaction with NMI. Residue K329 forms a Glycyl lysine isopeptide (Lys-Gly) (interchain with G-Cter in ubiquitin) linkage. Residues K398 and K400 each participate in a glycyl lysine isopeptide (Lys-Gly) (interchain with G-Cter in SUMO) cross-link. Residues S425, S426, and S429 each carry the phosphoserine modification. Position 431 is a phosphoserine; by TBK1 and IKKE (S431). Phosphoserine is present on residues S437, S438, and S441.

It belongs to the IRF family. As to quaternary structure, monomer. Homodimer; phosphorylation-induced. Heterodimer with IRF3. Interacts with TICAM1 and TICAM2. Interacts with MYD88 and TRAF6. Interacts with NMI; the interaction is direct and leads to the inhibition of IRF7-mediated type I IFN production. Interacts with GBP4; preventing interaction between TRAF6 and IRF7, resulting in impaired TRAF6-mediated IRF7 ubiquitination. Interacts with TARBP2; this interaction prevents IRF7 phosphorylation and activation. Acetylation inhibits its DNA-binding ability and activity. Post-translationally, in response to a viral infection, phosphorylated by TBK1 and IKBKE1. Phosphorylation, and subsequent activation is inhibited by vaccinia virus protein E3. In TLR7- and TLR9-mediated signaling pathway, phosphorylated by IRAK1. In terms of processing, TRAF6-mediated ubiquitination is required for IRF7 activation. TRIM35 mediates IRF7 'Lys-48'-linked polyubiquitination and subsequent proteasomal degradation. 'Lys-48'-linked polyubiquitination and subsequent proteasomal degradation is NMI-dependent in response to Sendai virus infection. Ubiquitinated by UBE3C, leading to its degradation. Sumoylated by TRIM28, which inhibits its transactivation activity. Post-translationally, 'Lys-63'-linked ubiquitination by NEURL3 promotes IRF7 activation.

The protein resides in the nucleus. Its subcellular location is the cytoplasm. With respect to regulation, in the absence of viral infection, maintained as a monomer in an autoinhibited state and phosphorylation disrupts this autoinhibition leading to the liberation of the DNA-binding and dimerization activities and its nuclear localization where it can activate type I IFN and ISG genes. In terms of biological role, key transcriptional regulator of type I interferon (IFN)-dependent immune responses and plays a critical role in the innate immune response against DNA and RNA viruses. Regulates the transcription of type I IFN genes (IFN-alpha and IFN-beta) and IFN-stimulated genes (ISG) by binding to an interferon-stimulated response element (ISRE) in their promoters. Can efficiently activate both the IFN-beta (IFNB) and the IFN-alpha (IFNA) genes and mediate their induction via both the virus-activated, MyD88-independent pathway and the TLR-activated, MyD88-dependent pathway. Induces transcription of ubiquitin hydrolase USP25 mRNA in response to lipopolysaccharide (LPS) or viral infection in a type I IFN-dependent manner. Required during both the early and late phases of the IFN gene induction but is more critical for the late than for the early phase. Exists in an inactive form in the cytoplasm of uninfected cells and following viral infection, double-stranded RNA (dsRNA), or toll-like receptor (TLR) signaling, becomes phosphorylated by IKBKE and TBK1 kinases. This induces a conformational change, leading to its dimerization and nuclear localization where along with other coactivators it can activate transcription of the type I IFN and ISG genes. Can also play a role in regulating adaptive immune responses by inducing PSMB9/LMP2 expression, either directly or through induction of IRF1. Binds to the Q promoter (Qp) of EBV nuclear antigen 1 a (EBNA1) and may play a role in the regulation of EBV latency. Can activate distinct gene expression programs in macrophages and regulate the anti-tumor properties of primary macrophages. This Mus musculus (Mouse) protein is Interferon regulatory factor 7 (Irf7).